The chain runs to 353 residues: UDP-N-acetylglucosamine--N-acetylmuramyl-(pentapeptide) pyrophosphoryl-undecaprenol N-acetylglucosamine transferase (353 aa).

UDP-N-acetyl-alpha-D-glucosamine contacts are provided by residues 10-12 (TGG), N124, S183, and Q283.

The protein belongs to the glycosyltransferase 28 family. MurG subfamily.

Its subcellular location is the cell inner membrane. It catalyses the reaction di-trans,octa-cis-undecaprenyl diphospho-N-acetyl-alpha-D-muramoyl-L-alanyl-D-glutamyl-meso-2,6-diaminopimeloyl-D-alanyl-D-alanine + UDP-N-acetyl-alpha-D-glucosamine = di-trans,octa-cis-undecaprenyl diphospho-[N-acetyl-alpha-D-glucosaminyl-(1-&gt;4)]-N-acetyl-alpha-D-muramoyl-L-alanyl-D-glutamyl-meso-2,6-diaminopimeloyl-D-alanyl-D-alanine + UDP + H(+). It participates in cell wall biogenesis; peptidoglycan biosynthesis. Its function is as follows. Cell wall formation. Catalyzes the transfer of a GlcNAc subunit on undecaprenyl-pyrophosphoryl-MurNAc-pentapeptide (lipid intermediate I) to form undecaprenyl-pyrophosphoryl-MurNAc-(pentapeptide)GlcNAc (lipid intermediate II). The sequence is that of UDP-N-acetylglucosamine--N-acetylmuramyl-(pentapeptide) pyrophosphoryl-undecaprenol N-acetylglucosamine transferase from Helicobacter pylori (strain ATCC 700392 / 26695) (Campylobacter pylori).